The following is a 484-amino-acid chain: NADH-ubiquinone oxidoreductase chain 4 (484 aa).

The next 14 membrane-spanning stretches (helical) occupy residues 1–21 (MLTL…PMQG), 33–53 (LALG…GEFD), 77–97 (VDGI…ICIL), 109–129 (YFLM…VVLD), 130–150 (ILLF…IVGI), 162–182 (FLLF…FLVI), 206–226 (LLWL…PFHV), 236–256 (PLAG…YGYM), 270–290 (FSPL…LATL), 295–315 (FKAL…LGLF), 326–346 (LLLS…VGGV), 365–385 (YMPL…AVPL), 405–425 (VFAV…IWLY), and 448–468 (FMLL…PNII).

It belongs to the complex I subunit 4 family.

The protein resides in the mitochondrion inner membrane. The enzyme catalyses a ubiquinone + NADH + 5 H(+)(in) = a ubiquinol + NAD(+) + 4 H(+)(out). In terms of biological role, core subunit of the mitochondrial membrane respiratory chain NADH dehydrogenase (Complex I) that is believed to belong to the minimal assembly required for catalysis. Complex I functions in the transfer of electrons from NADH to the respiratory chain. The immediate electron acceptor for the enzyme is believed to be ubiquinone. This Mycosarcoma maydis (Corn smut fungus) protein is NADH-ubiquinone oxidoreductase chain 4 (ND4).